The chain runs to 281 residues: MKLAVIGSGTMGSGIVQTFASCGHDVCLKSRTQGAIDKCLALLDKNLTKLVTKGKWMKATKAEILSHVSSTTNYEDLKDMDLIIEASVEDMNIKKDVFKLLDELCKEDTILATNTSSLSITEIASSTKRPDKVIGMHFFNPVPMMKLVEVISGQLTSKVTFDTVFELSKSINKVPVDVSESPGFVVNRILIPMINEAVGIYADGVASKEEIDEAMKLGANHPMGPLALGDLIGLDVVLAIMNVLYTEFGDTKYTAHPLLAKMVRANQLGRKTKIGFYDYNK.

The protein belongs to the 3-hydroxyacyl-CoA dehydrogenase family.

The enzyme catalyses (3S)-3-hydroxybutanoyl-CoA + NADP(+) = acetoacetyl-CoA + NADPH + H(+). It participates in lipid metabolism; butanoate metabolism. The polypeptide is 3-hydroxybutyryl-CoA dehydrogenase (hbd) (Clostridioides difficile (Peptoclostridium difficile)).